The following is a 472-amino-acid chain: Probable sterol O-acyltransferase 2 (472 aa).

Phosphoserine is present on Ser12. Transmembrane regions (helical) follow at residues 61-81 (FTGF…MSFL), 111-131 (LAMS…ALGY), and 135-155 (YGLG…HCVL). N-linked (GlcNAc...) asparagine glycosylation is present at Asn161. A helical transmembrane segment spans residues 170–190 (FILHSMVILMKLHSYNVVNGW). The N-linked (GlcNAc...) asparagine glycan is linked to Asn233. 2 helical membrane passes run 262 to 282 (IHYL…LVII) and 317 to 337 (TVAF…WVIF). An N-linked (GlcNAc...) asparagine glycan is attached at Asn342. Residues 355–361 (FYDDWWN) carry the FYXDWWN motif motif. His409 is an active-site residue. Residues 452–472 (IAFWFSIIIGIALIAALYILF) form a helical membrane-spanning segment.

Belongs to the membrane-bound acyltransferase family. Sterol o-acyltransferase subfamily.

It localises to the endoplasmic reticulum membrane. Functionally, sterol O-acyltransferase that catalyzes the formation of stery esters. In Schizosaccharomyces pombe (strain 972 / ATCC 24843) (Fission yeast), this protein is Probable sterol O-acyltransferase 2 (are2).